The sequence spans 967 residues: Phosphoenolpyruvate carboxylase 1 (967 aa).

The residue at position 11 (Ser-11) is a Phosphoserine. Catalysis depends on residues His-173 and Lys-602. The residue at position 704 (Ser-704) is a Phosphoserine.

The protein belongs to the PEPCase type 1 family. Homotetramer. Requires Mg(2+) as cofactor. The cofactor is Mn(2+). In terms of processing, the phosphorylation of Ser-11 is reversibly promoted by inorganic phosphate (Pi) deprivation. Enhanced activity by phosphorylation at pH 7.3 by lowering Km and sensitivity to inhibition by L-malate and L-aspartate, while enhancing activation by glucose 6-phosphate. In terms of tissue distribution, expressed in all plant organs, with higher levels in roots.

It is found in the cytoplasm. It catalyses the reaction oxaloacetate + phosphate = phosphoenolpyruvate + hydrogencarbonate. By light-reversible phosphorylation. Activated by inorganic phosphate (Pi) deprivation and glucose 6-phosphate. Inhibited by L-malate and L-aspartate. In terms of biological role, through the carboxylation of phosphoenolpyruvate (PEP) it forms oxaloacetate, a four-carbon dicarboxylic acid source for the tricarboxylic acid cycle. Contributes probably to the adaptation to inorganic phosphate (Pi) deprivation. The sequence is that of Phosphoenolpyruvate carboxylase 1 (PPC1) from Arabidopsis thaliana (Mouse-ear cress).